A 379-amino-acid polypeptide reads, in one-letter code: Chaperone protein DnaJ (379 aa).

The region spanning 7–72 is the J domain; it reads DYYEVLGVDK…KKRSMYDQFG (66 aa). The segment at 147-225 adopts a CR-type zinc-finger fold; the sequence is GKKAELSYTR…CGGNGLERKK (79 aa). Positions 160, 163, 177, 180, 199, 202, 213, and 216 each coordinate Zn(2+). 4 CXXCXGXG motif repeats span residues 160–167, 177–184, 199–206, and 213–220; these read CSECHGTG, CPDCKGTG, CPTCGGEG, and CKKCGGNG.

The protein belongs to the DnaJ family. Homodimer. Zn(2+) serves as cofactor.

The protein resides in the cytoplasm. In terms of biological role, participates actively in the response to hyperosmotic and heat shock by preventing the aggregation of stress-denatured proteins and by disaggregating proteins, also in an autonomous, DnaK-independent fashion. Unfolded proteins bind initially to DnaJ; upon interaction with the DnaJ-bound protein, DnaK hydrolyzes its bound ATP, resulting in the formation of a stable complex. GrpE releases ADP from DnaK; ATP binding to DnaK triggers the release of the substrate protein, thus completing the reaction cycle. Several rounds of ATP-dependent interactions between DnaJ, DnaK and GrpE are required for fully efficient folding. Also involved, together with DnaK and GrpE, in the DNA replication of plasmids through activation of initiation proteins. The protein is Chaperone protein DnaJ of Treponema denticola (strain ATCC 35405 / DSM 14222 / CIP 103919 / JCM 8153 / KCTC 15104).